The primary structure comprises 779 residues: Filament-like plant protein 1 (779 aa).

Basic and acidic residues predominate over residues 1 to 14 (MEKRKRESSERSFG). Disordered regions lie at residues 1–55 (MEKR…ETEK), 253–274 (ASFNDHRSTDSHSDGGERMDVS), and 315–336 (PETPDGNGKSGPESVTEEVVVP). Residues 47–200 (VSLEVETEKE…KENVMLRHEL (154 aa)) adopt a coiled-coil conformation. Positions 256-272 (NDHRSTDSHSDGGERMD) are enriched in basic and acidic residues. The span at 324–336 (SGPESVTEEVVVP) shows a compositional bias: low complexity. Residues 337 to 674 (SENSLASEIE…ANCQKTIASL (338 aa)) adopt a coiled-coil conformation. The segment covering 718 to 731 (FMTRNHPESIKPTK) has biased composition (basic and acidic residues). Residues 718–764 (FMTRNHPESIKPTKETSPSSSSSTASAAVSMPVSTNRGSSEKNRNGF) are disordered. Positions 733–752 (TSPSSSSSTASAAVSMPVST) are enriched in low complexity.

It belongs to the FPP family. As to quaternary structure, interacts with WPP/MAF proteins.

This chain is Filament-like plant protein 1 (FPP1), found in Arabidopsis thaliana (Mouse-ear cress).